A 466-amino-acid chain; its full sequence is ATP synthase subunit beta (466 aa).

ATP is bound at residue 156-163 (GGAGVGKT).

It belongs to the ATPase alpha/beta chains family. In terms of assembly, F-type ATPases have 2 components, CF(1) - the catalytic core - and CF(0) - the membrane proton channel. CF(1) has five subunits: alpha(3), beta(3), gamma(1), delta(1), epsilon(1). CF(0) has three main subunits: a(1), b(2) and c(9-12). The alpha and beta chains form an alternating ring which encloses part of the gamma chain. CF(1) is attached to CF(0) by a central stalk formed by the gamma and epsilon chains, while a peripheral stalk is formed by the delta and b chains.

It localises to the cell inner membrane. It catalyses the reaction ATP + H2O + 4 H(+)(in) = ADP + phosphate + 5 H(+)(out). Its function is as follows. Produces ATP from ADP in the presence of a proton gradient across the membrane. The catalytic sites are hosted primarily by the beta subunits. The polypeptide is ATP synthase subunit beta (Polynucleobacter necessarius subsp. necessarius (strain STIR1)).